The following is a 116-amino-acid chain: CDKN2AIP N-terminal-like protein (116 aa).

Met1 bears the N-acetylmethionine mark. Positions 24-116 (AEQFRSYSES…RSELMKKHQS (93 aa)) constitute an XRN2-binding (XTBD) domain.

This sequence belongs to the CARF family. Interacts with XRN2; the interaction is direct.

The protein is CDKN2AIP N-terminal-like protein (CDKN2AIPNL) of Bos taurus (Bovine).